Here is a 132-residue protein sequence, read N- to C-terminus: Small ribosomal subunit protein uS17c (132 aa).

Low complexity predominate over residues 1–11 (MLLLSSPFVSV). 2 disordered regions span residues 1–23 (MLLL…SHGA) and 104–132 (PLPP…SSRE). A chloroplast-targeting transit peptide spans 1 to 31 (MLLLSSPFVSVSPPPPPLSSHGARPALRIEA). Residues 122 to 132 (SDDDQEPSSRE) are compositionally biased toward acidic residues.

This sequence belongs to the universal ribosomal protein uS17 family. As to quaternary structure, part of the 30S ribosomal subunit.

The protein localises to the plastid. The protein resides in the chloroplast. Functionally, one of the primary rRNA binding proteins, it binds specifically to the 5'-end of 16S ribosomal RNA. In terms of biological role, in the hcf60 mutation the Activator tag is inserted 17 base pars upstream of the initiation codon. This mutation is seedling lethal, due to plastid ribosome insufficiency. However under non-light stressed conditions photosynthesis and oxygen evolution can occur. This Zea mays (Maize) protein is Small ribosomal subunit protein uS17c (RPS17).